The following is a 118-amino-acid chain: Large ribosomal subunit protein bL19 (118 aa).

This sequence belongs to the bacterial ribosomal protein bL19 family.

Functionally, this protein is located at the 30S-50S ribosomal subunit interface and may play a role in the structure and function of the aminoacyl-tRNA binding site. This is Large ribosomal subunit protein bL19 from Levilactobacillus brevis (strain ATCC 367 / BCRC 12310 / CIP 105137 / JCM 1170 / LMG 11437 / NCIMB 947 / NCTC 947) (Lactobacillus brevis).